A 487-amino-acid polypeptide reads, in one-letter code: Glutamyl-tRNA(Gln) amidotransferase subunit A (487 aa).

Residues Lys78 and Ser153 each act as charge relay system in the active site. Residue Ser177 is the Acyl-ester intermediate of the active site.

It belongs to the amidase family. GatA subfamily. Heterotrimer of A, B and C subunits.

It catalyses the reaction L-glutamyl-tRNA(Gln) + L-glutamine + ATP + H2O = L-glutaminyl-tRNA(Gln) + L-glutamate + ADP + phosphate + H(+). Allows the formation of correctly charged Gln-tRNA(Gln) through the transamidation of misacylated Glu-tRNA(Gln) in organisms which lack glutaminyl-tRNA synthetase. The reaction takes place in the presence of glutamine and ATP through an activated gamma-phospho-Glu-tRNA(Gln). The protein is Glutamyl-tRNA(Gln) amidotransferase subunit A of Oleidesulfovibrio alaskensis (strain ATCC BAA-1058 / DSM 17464 / G20) (Desulfovibrio alaskensis).